The primary structure comprises 361 residues: uncharacterized protein (361 aa).

This is an uncharacterized protein from Schizosaccharomyces pombe (strain 972 / ATCC 24843) (Fission yeast).